A 1429-amino-acid chain; its full sequence is DNA-directed RNA polymerase subunit beta' (1429 aa).

Zn(2+) contacts are provided by cysteine 68, cysteine 70, cysteine 83, and cysteine 86. Aspartate 459, aspartate 461, and aspartate 463 together coordinate Mg(2+). Cysteine 805, cysteine 879, cysteine 886, and cysteine 889 together coordinate Zn(2+). The interval 1407–1429 (ESFPLLGGDGEPASTTSSTTEGE) is disordered. The span at 1419–1429 (ASTTSSTTEGE) shows a compositional bias: polar residues.

It belongs to the RNA polymerase beta' chain family. The RNAP catalytic core consists of 2 alpha, 1 beta, 1 beta' and 1 omega subunit. When a sigma factor is associated with the core the holoenzyme is formed, which can initiate transcription. It depends on Mg(2+) as a cofactor. Zn(2+) is required as a cofactor.

It catalyses the reaction RNA(n) + a ribonucleoside 5'-triphosphate = RNA(n+1) + diphosphate. DNA-dependent RNA polymerase catalyzes the transcription of DNA into RNA using the four ribonucleoside triphosphates as substrates. The sequence is that of DNA-directed RNA polymerase subunit beta' from Rhodopirellula baltica (strain DSM 10527 / NCIMB 13988 / SH1).